A 142-amino-acid polypeptide reads, in one-letter code: Large ribosomal subunit protein uL11 (142 aa).

The protein belongs to the universal ribosomal protein uL11 family. Part of the ribosomal stalk of the 50S ribosomal subunit. Interacts with L10 and the large rRNA to form the base of the stalk. L10 forms an elongated spine to which L12 dimers bind in a sequential fashion forming a multimeric L10(L12)X complex. One or more lysine residues are methylated.

In terms of biological role, forms part of the ribosomal stalk which helps the ribosome interact with GTP-bound translation factors. The sequence is that of Large ribosomal subunit protein uL11 from Shewanella pealeana (strain ATCC 700345 / ANG-SQ1).